The chain runs to 407 residues: Phosphopentomutase (407 aa).

Residues Asp10, Asp306, His311, Asp347, His348, and His359 each coordinate Mn(2+).

It belongs to the phosphopentomutase family. Mn(2+) serves as cofactor.

The protein localises to the cytoplasm. It catalyses the reaction 2-deoxy-alpha-D-ribose 1-phosphate = 2-deoxy-D-ribose 5-phosphate. The catalysed reaction is alpha-D-ribose 1-phosphate = D-ribose 5-phosphate. It functions in the pathway carbohydrate degradation; 2-deoxy-D-ribose 1-phosphate degradation; D-glyceraldehyde 3-phosphate and acetaldehyde from 2-deoxy-alpha-D-ribose 1-phosphate: step 1/2. In terms of biological role, isomerase that catalyzes the conversion of deoxy-ribose 1-phosphate (dRib-1-P) and ribose 1-phosphate (Rib-1-P) to deoxy-ribose 5-phosphate (dRib-5-P) and ribose 5-phosphate (Rib-5-P), respectively. In Buchnera aphidicola subsp. Acyrthosiphon pisum (strain Tuc7), this protein is Phosphopentomutase.